Consider the following 427-residue polypeptide: Serine hydroxymethyltransferase (427 aa).

(6S)-5,6,7,8-tetrahydrofolate-binding positions include L118 and 122–124; that span reads GHL. At K227 the chain carries N6-(pyridoxal phosphate)lysine. 351-353 is a (6S)-5,6,7,8-tetrahydrofolate binding site; that stretch reads SPF.

The protein belongs to the SHMT family. As to quaternary structure, homodimer. Pyridoxal 5'-phosphate is required as a cofactor.

It is found in the cytoplasm. The enzyme catalyses (6R)-5,10-methylene-5,6,7,8-tetrahydrofolate + glycine + H2O = (6S)-5,6,7,8-tetrahydrofolate + L-serine. It functions in the pathway one-carbon metabolism; tetrahydrofolate interconversion. Its pathway is amino-acid biosynthesis; glycine biosynthesis; glycine from L-serine: step 1/1. Its function is as follows. Catalyzes the reversible interconversion of serine and glycine with tetrahydrofolate (THF) serving as the one-carbon carrier. This reaction serves as the major source of one-carbon groups required for the biosynthesis of purines, thymidylate, methionine, and other important biomolecules. Also exhibits THF-independent aldolase activity toward beta-hydroxyamino acids, producing glycine and aldehydes, via a retro-aldol mechanism. This is Serine hydroxymethyltransferase from Thermotoga petrophila (strain ATCC BAA-488 / DSM 13995 / JCM 10881 / RKU-1).